The primary structure comprises 552 residues: MSESKKNPETKYIFVTGGVLSSLGKGITSSSVATLLKHSGFNVGILKIDPYINVDPGTMSPFEHGEVFVTYDGAETDLDIGHYERFLNTNFSSKHNFTTGQVYLSVIERERRGGYLGKTIQVIPHIVDEIKHRVRLAGEGKEFLVVELGGTVGDIEGLPFLEAMREMKHELGLERVISVHVTLIPLIKAAGELKTKPTQHSVQELRRIGITPQIIIARSEKPLPKELKKKLSLGCDVDYDSVIVAEDAPTIYQVPLNFMKEDILTPIARRFNMPKIEPKMEEWNRLVKQILAPKDEVTIAFVGKYLSLKESYKSLIEALTHAGANLDTKVNIKWCDSEEIESSGVEPLRYVDGILVPGGFGERGVKGKMEAIRFARENKIPFLGICLGMQLAMIEFARNVLGIAEANSMEFDPQTPEPIIYLIEDFIDQQGNKQVRTHTSPMGGTMRLGEYECGLKEGSQTKAAYQGESLIKERHRHRYEANPKYRERIEQAGLIVSGESEGLIEALELVDHPWFIGVQFHPEFTSRLQNPNPVILTFIQKSLELKKVDRDS.

The segment at 1-273 (MSESKKNPET…LTPIARRFNM (273 aa)) is amidoligase domain. Serine 21 serves as a coordination point for CTP. Serine 21 provides a ligand contact to UTP. ATP is bound by residues 22 to 27 (SLGKGI) and aspartate 79. Residues aspartate 79 and glutamate 147 each contribute to the Mg(2+) site. CTP contacts are provided by residues 154–156 (DIE), 194–199 (KTKPTQ), and lysine 230. UTP is bound by residues 194 to 199 (KTKPTQ) and lysine 230. One can recognise a Glutamine amidotransferase type-1 domain in the interval 298 to 548 (TIAFVGKYLS…IQKSLELKKV (251 aa)). Glycine 359 lines the L-glutamine pocket. Residue cysteine 386 is the Nucleophile; for glutamine hydrolysis of the active site. L-glutamine is bound by residues 387–390 (LGMQ), glutamate 410, and arginine 478. Residues histidine 521 and glutamate 523 contribute to the active site.

The protein belongs to the CTP synthase family. As to quaternary structure, homotetramer.

The enzyme catalyses UTP + L-glutamine + ATP + H2O = CTP + L-glutamate + ADP + phosphate + 2 H(+). It carries out the reaction L-glutamine + H2O = L-glutamate + NH4(+). The catalysed reaction is UTP + NH4(+) + ATP = CTP + ADP + phosphate + 2 H(+). Its pathway is pyrimidine metabolism; CTP biosynthesis via de novo pathway; CTP from UDP: step 2/2. With respect to regulation, allosterically activated by GTP, when glutamine is the substrate; GTP has no effect on the reaction when ammonia is the substrate. The allosteric effector GTP functions by stabilizing the protein conformation that binds the tetrahedral intermediate(s) formed during glutamine hydrolysis. Inhibited by the product CTP, via allosteric rather than competitive inhibition. Catalyzes the ATP-dependent amination of UTP to CTP with either L-glutamine or ammonia as the source of nitrogen. Regulates intracellular CTP levels through interactions with the four ribonucleotide triphosphates. The sequence is that of CTP synthase from Wolinella succinogenes (strain ATCC 29543 / DSM 1740 / CCUG 13145 / JCM 31913 / LMG 7466 / NCTC 11488 / FDC 602W) (Vibrio succinogenes).